We begin with the raw amino-acid sequence, 157 residues long: Endoribonuclease YbeY (157 aa).

Positions 115, 119, and 125 each coordinate Zn(2+).

It belongs to the endoribonuclease YbeY family. It depends on Zn(2+) as a cofactor.

It localises to the cytoplasm. Its function is as follows. Single strand-specific metallo-endoribonuclease involved in late-stage 70S ribosome quality control and in maturation of the 3' terminus of the 16S rRNA. In Micrococcus luteus (strain ATCC 4698 / DSM 20030 / JCM 1464 / CCM 169 / CCUG 5858 / IAM 1056 / NBRC 3333 / NCIMB 9278 / NCTC 2665 / VKM Ac-2230) (Micrococcus lysodeikticus), this protein is Endoribonuclease YbeY.